A 157-amino-acid chain; its full sequence is Lipoprotein signal peptidase (157 aa).

The next 3 helical transmembrane spans lie at 10-30 (LIFI…KYAI), 58-78 (FLEG…FIFL), and 84-104 (LFKN…SNVL). Active-site residues include D114 and D131. A helical transmembrane segment spans residues 122 to 142 (FDFAIFNFADVMIDVGVGVLL).

Belongs to the peptidase A8 family.

It is found in the cell inner membrane. The enzyme catalyses Release of signal peptides from bacterial membrane prolipoproteins. Hydrolyzes -Xaa-Yaa-Zaa-|-(S,diacylglyceryl)Cys-, in which Xaa is hydrophobic (preferably Leu), and Yaa (Ala or Ser) and Zaa (Gly or Ala) have small, neutral side chains.. Its pathway is protein modification; lipoprotein biosynthesis (signal peptide cleavage). In terms of biological role, this protein specifically catalyzes the removal of signal peptides from prolipoproteins. This Helicobacter pylori (strain Shi470) protein is Lipoprotein signal peptidase.